The primary structure comprises 111 residues: Propane 2-monooxygenase, effector component (111 aa).

The protein belongs to the TmoD/XamoD family. As to quaternary structure, the propane 2-monooxygenase multicomponent enzyme system is composed of an electron transfer component and a monooxygenase component interacting with the effector protein PrmD. The electron transfer component is composed of a reductase (PrmB), and the monooxygenase component is formed by a large subunit (PrmA) and a small subunit (PrmC).

Effector component of the propane 2-monooxygenase multicomponent enzyme system which is involved in the degradation of propane via the O2-dependent hydroxylation of propane. The sequence is that of Propane 2-monooxygenase, effector component from Gordonia sp. (strain TY-5).